The primary structure comprises 146 residues: Bifunctional adenosine 5'-phosphosulfate phosphorylase/adenylylsulfatase HINT4 (146 aa).

One can recognise an HIT domain in the interval 9-120 (IFCEIVRNPT…YVPRWKAIKY (112 aa)). The Histidine triad motif motif lies at 101–105 (HLHLH). The active-site Tele-AMP-histidine intermediate is the His-105.

As to quaternary structure, homodimer.

The protein resides in the peroxisome. The catalysed reaction is sulfate + ADP + H(+) = adenosine 5'-phosphosulfate + phosphate. It catalyses the reaction adenosine 5'-phosphosulfate + H2O = sulfate + AMP + 2 H(+). With respect to regulation, the adenosine 5'-phosphosulfate phosphorylase activity is enhanced at low pH. Functionally, possesses adenylylsulfatase activity in vitro, releasing AMP and sulfate from adenylyl sulfate. Also possesses adenosine 5'-phosphosulfate (APS) phosphorylase activity in vitro. Catalyzes the phosphorolysis of APS, leading to ADP and sulfate. This Arabidopsis thaliana (Mouse-ear cress) protein is Bifunctional adenosine 5'-phosphosulfate phosphorylase/adenylylsulfatase HINT4.